Consider the following 114-residue polypeptide: Iron-sulfur cluster insertion protein ErpA (114 aa).

3 residues coordinate iron-sulfur cluster: Cys-42, Cys-106, and Cys-108.

It belongs to the HesB/IscA family. As to quaternary structure, homodimer. Iron-sulfur cluster is required as a cofactor.

Its function is as follows. Required for insertion of 4Fe-4S clusters for at least IspG. This is Iron-sulfur cluster insertion protein ErpA from Edwardsiella ictaluri (strain 93-146).